Consider the following 265-residue polypeptide: Indole-3-glycerol phosphate synthase (265 aa).

The protein belongs to the TrpC family.

It carries out the reaction 1-(2-carboxyphenylamino)-1-deoxy-D-ribulose 5-phosphate + H(+) = (1S,2R)-1-C-(indol-3-yl)glycerol 3-phosphate + CO2 + H2O. Its pathway is amino-acid biosynthesis; L-tryptophan biosynthesis; L-tryptophan from chorismate: step 4/5. The polypeptide is Indole-3-glycerol phosphate synthase (Desulforamulus reducens (strain ATCC BAA-1160 / DSM 100696 / MI-1) (Desulfotomaculum reducens)).